The following is a 308-amino-acid chain: D-alanine--D-alanine ligase (308 aa).

The ATP-grasp domain occupies 102-302 (KKVAAAAGIP…FGDLVSWMVE (201 aa)). ATP is bound at residue 128–183 (PLQPPYVVKPVREGSSFGVVIVKEDQSHPPQILTSSEWPFGNQVMVERYIHGRELT). Positions 252, 269, and 271 each coordinate Mg(2+).

Belongs to the D-alanine--D-alanine ligase family. Mg(2+) is required as a cofactor. Mn(2+) serves as cofactor.

It is found in the cytoplasm. It catalyses the reaction 2 D-alanine + ATP = D-alanyl-D-alanine + ADP + phosphate + H(+). It participates in cell wall biogenesis; peptidoglycan biosynthesis. Its function is as follows. Cell wall formation. This Agrobacterium fabrum (strain C58 / ATCC 33970) (Agrobacterium tumefaciens (strain C58)) protein is D-alanine--D-alanine ligase.